The chain runs to 802 residues: Chondroitin sulfate synthase 1 (802 aa).

The Cytoplasmic segment spans residues 1–7 (MAARGRR). Residues 8 to 28 (AWLSVLLGLVLGFVLASRLVL) traverse the membrane as a helical; Signal-anchor for type II membrane protein segment. Residues 29-802 (PRASELKRAG…SNNNGSVRTA (774 aa)) are Lumenal-facing. Residues 34 to 82 (LKRAGPRRRASPEGCRSGQAAASQAGGARGDARGAQLWPPGSDPDGGPR) are disordered. Composition is skewed to low complexity over residues 49 to 59 (RSGQAAASQAG) and 66 to 78 (RGAQ…SDPD). N189 and N623 each carry an N-linked (GlcNAc...) asparagine glycan. 2 residues coordinate a divalent metal cation: D633 and H747. N796 carries N-linked (GlcNAc...) asparagine glycosylation.

It belongs to the chondroitin N-acetylgalactosaminyltransferase family. Co(2+) is required as a cofactor. It depends on Mn(2+) as a cofactor. Cd(2+) serves as cofactor. Ubiquitous, with the highest levels in placenta. Detected at low levels in brain, heart, skeletal muscle, colon, thymus, spleen, kidney, liver, adrenal gland, mammary gland, stomach, small intestine, lung and peripheral blood leukocytes.

The protein localises to the golgi apparatus. It localises to the golgi stack membrane. Its subcellular location is the secreted. The catalysed reaction is 3-O-(beta-D-GlcA-(1-&gt;3)-beta-D-GalNAc-(1-&gt;4)-beta-D-GlcA-(1-&gt;3)-beta-D-Gal-(1-&gt;3)-beta-D-Gal-(1-&gt;4)-beta-D-Xyl)-L-seryl-[protein] + UDP-N-acetyl-alpha-D-galactosamine = 3-O-(beta-D-GalNAc-(1-&gt;4)-beta-D-GlcA-(1-&gt;3)-beta-D-GalNAc-(1-&gt;4)-beta-D-GlcA-(1-&gt;3)-beta-D-Gal-(1-&gt;3)-beta-D-Gal-(1-&gt;4)-beta-D-Xyl)-L-seryl-[protein] + UDP + H(+). It catalyses the reaction 3-O-{beta-D-GlcA-(1-&gt;3)-[beta-D-GalNAc-(1-&gt;4)-beta-D-GlcA-(1-&gt;3)](n)-beta-D-GalNAc-(1-&gt;4)-beta-D-GlcA-(1-&gt;3)-beta-D-Gal-(1-&gt;3)-beta-D-Gal-(1-&gt;4)-beta-D-Xyl}-L-seryl-[protein] + UDP-N-acetyl-alpha-D-galactosamine = 3-O-{[beta-D-GalNAc-(1-&gt;4)-beta-D-GlcA-(1-&gt;3)](n+1)-beta-D-GalNAc-(1-&gt;4)-beta-D-GlcA-(1-&gt;3)-beta-D-Gal-(1-&gt;3)-beta-D-Gal-(1-&gt;4)-beta-D-Xyl}-L-seryl-[protein] + UDP + H(+). The enzyme catalyses 3-O-(beta-D-GalNAc-(1-&gt;4)-beta-D-GlcA-(1-&gt;3)-beta-D-Gal-(1-&gt;3)-beta-D-Gal-(1-&gt;4)-beta-D-Xyl)-L-seryl-[protein] + UDP-alpha-D-glucuronate = 3-O-(beta-D-GlcA-(1-&gt;3)-beta-D-GalNAc-(1-&gt;4)-beta-D-GlcA-(1-&gt;3)-beta-D-Gal-(1-&gt;3)-beta-D-Gal-(1-&gt;4)-beta-D-Xyl)-L-seryl-[protein] + UDP + H(+). It carries out the reaction 3-O-{[beta-D-GalNAc-(1-&gt;4)-beta-D-GlcA-(1-&gt;3)](n)-beta-D-GalNAc-(1-&gt;4)-beta-D-GlcA-(1-&gt;3)-beta-D-Gal-(1-&gt;3)-beta-D-Gal-(1-&gt;4)-beta-D-Xyl}-L-seryl-[protein] + UDP-alpha-D-glucuronate = 3-O-{beta-D-GlcA-(1-&gt;3)-[beta-D-GalNAc-(1-&gt;4)-beta-D-GlcA-(1-&gt;3)](n)-beta-D-GalNAc-(1-&gt;4)-beta-D-GlcA-(1-&gt;3)-beta-D-Gal-(1-&gt;3)-beta-D-Gal-(1-&gt;4)-beta-D-Xyl}-L-seryl-[protein] + UDP + H(+). Has both beta-1,3-glucuronic acid and beta-1,4-N-acetylgalactosamine transferase activity. Transfers glucuronic acid (GlcUA) from UDP-GlcUA and N-acetylgalactosamine (GalNAc) from UDP-GalNAc to the non-reducing end of the elongating chondroitin polymer. Involved in the negative control of osteogenesis likely through the modulation of NOTCH signaling. This chain is Chondroitin sulfate synthase 1, found in Homo sapiens (Human).